The primary structure comprises 591 residues: Peroxisome assembly protein 2 (591 aa).

A disordered region spans residues 1–78 (MSDSDPKPTA…TNIDTNNNTN (78 aa)). The Peroxisomal matrix segment spans residues 1 to 148 (MSDSDPKPTA…TSREGTRPAF (148 aa)). Residues 7 to 26 (KPTAAKGAAPTSIPNSTRNP) show a composition bias toward low complexity. The span at 27 to 54 (NPTPPNPNPNPNPISTPAPTPTATPSPP) shows a compositional bias: pro residues. A compositionally biased stretch (low complexity) spans 55 to 78 (IASSSNNGNNSTRSTNIDTNNNTN). The chain crosses the membrane as a helical span at residues 149-175 (RVGQVDAELLDEELVELLRGQVREALR). The Cytoplasmic segment spans residues 176-196 (YVGGGGGGGGGGGGGGVGSGV). Residues 197–222 (AQDWEAEISLALRAVLFKLTVWDHDA) traverse the membrane as a helical segment. Over 223 to 246 (TYGAALQNLKYTDARRDGPALAPP) the chain is Peroxisomal matrix. Residues 247–273 (SRWQKALYGLVTVGGRYLWAKWEDWLL) form a helical membrane-spanning segment. Residues 274 to 283 (EQDDGFEGPS) lie on the Cytoplasmic side of the membrane. The helical transmembrane segment at 284–314 (PRVKRLARWTSALSTLHASAALVSFLVFLLH) threads the bilayer. The Peroxisomal matrix portion of the chain corresponds to 315 to 341 (GRYRTLLDRLLRMRLAPPTSQVSREVS). The chain crosses the membrane as a helical span at residues 342-365 (FEYLNRQLVWHAFTEFLLFVLPLV). The Cytoplasmic segment spans residues 366-591 (GINRWRRWLA…EDGLDEDPES (226 aa)). Zn(2+) is bound by residues Cys408, Cys411, Cys449, Cys451, Cys454, Cys457, Cys472, and Cys475. Residues 408–475 (CAICYRDQNS…EGEGWPCLRC (68 aa)) form an RING-type; atypical zinc finger. Positions 512–591 (KAPSDHEEEE…EDGLDEDPES (80 aa)) are disordered. Composition is skewed to acidic residues over residues 517–537 (HEEE…ENEG) and 575–591 (SEDY…DPES).

Belongs to the pex2/pex10/pex12 family. As to quaternary structure, component of the PEX2-PEX10-PEX12 retrotranslocation channel, composed of PEX2, PEX10 and PEX12.

The protein localises to the peroxisome membrane. It carries out the reaction [E2 ubiquitin-conjugating enzyme]-S-ubiquitinyl-L-cysteine + [acceptor protein]-L-cysteine = [E2 ubiquitin-conjugating enzyme]-L-cysteine + [acceptor protein]-S-ubiquitinyl-L-cysteine.. Its pathway is protein modification; protein ubiquitination. Its function is as follows. E3 ubiquitin-protein ligase component of a retrotranslocation channel required for peroxisome organization by mediating export of the PEX5 receptor from peroxisomes to the cytosol, thereby promoting PEX5 recycling. The retrotranslocation channel is composed of PEX2, PEX10 and PEX12; each subunit contributing transmembrane segments that coassemble into an open channel that specifically allows the passage of PEX5 through the peroxisomal membrane. PEX2 also regulates peroxisome organization by acting as a E3 ubiquitin-protein ligase. PEX2 ubiquitinates PEX5 during its passage through the retrotranslocation channel: catalyzes monoubiquitination of PEX5 at 'Cys-6', a modification that acts as a signal for PEX5 extraction into the cytosol. This is Peroxisome assembly protein 2 from Thermothelomyces thermophilus (strain ATCC 42464 / BCRC 31852 / DSM 1799) (Sporotrichum thermophile).